Consider the following 280-residue polypeptide: Hydroxyethylthiazole kinase (280 aa).

Met50 is a substrate binding site. Lys125 and Thr178 together coordinate ATP. Residue Gly205 coordinates substrate.

Belongs to the Thz kinase family. Requires Mg(2+) as cofactor.

It carries out the reaction 5-(2-hydroxyethyl)-4-methylthiazole + ATP = 4-methyl-5-(2-phosphooxyethyl)-thiazole + ADP + H(+). It functions in the pathway cofactor biosynthesis; thiamine diphosphate biosynthesis; 4-methyl-5-(2-phosphoethyl)-thiazole from 5-(2-hydroxyethyl)-4-methylthiazole: step 1/1. In terms of biological role, catalyzes the phosphorylation of the hydroxyl group of 4-methyl-5-beta-hydroxyethylthiazole (THZ). This Lacticaseibacillus paracasei (strain ATCC 334 / BCRC 17002 / CCUG 31169 / CIP 107868 / KCTC 3260 / NRRL B-441) (Lactobacillus paracasei) protein is Hydroxyethylthiazole kinase.